The sequence spans 319 residues: Phosphate acyltransferase (319 aa).

This sequence belongs to the PlsX family. In terms of assembly, homodimer. Probably interacts with PlsY.

It is found in the cytoplasm. The enzyme catalyses a fatty acyl-[ACP] + phosphate = an acyl phosphate + holo-[ACP]. The protein operates within lipid metabolism; phospholipid metabolism. Functionally, catalyzes the reversible formation of acyl-phosphate (acyl-PO(4)) from acyl-[acyl-carrier-protein] (acyl-ACP). This enzyme utilizes acyl-ACP as fatty acyl donor, but not acyl-CoA. This Chlamydia muridarum (strain MoPn / Nigg) protein is Phosphate acyltransferase.